The chain runs to 554 residues: CTP synthase (554 aa).

Residues 1–270 (MTKFVFVTGG…DRIICEELRI (270 aa)) form an amidoligase domain region. Ser-13 lines the CTP pocket. Ser-13 contributes to the UTP binding site. ATP-binding positions include 14 to 19 (SLGKGI) and Asp-71. The Mg(2+) site is built by Asp-71 and Glu-144. Residues 151 to 153 (DIE), 191 to 196 (KTKPTQ), and Lys-227 contribute to the CTP site. UTP-binding positions include 191 to 196 (KTKPTQ) and Lys-227. The 253-residue stretch at 295-547 (TIGMVGKYVD…VEAALAHRQR (253 aa)) folds into the Glutamine amidotransferase type-1 domain. Gly-356 is an L-glutamine binding site. Cys-383 serves as the catalytic Nucleophile; for glutamine hydrolysis. L-glutamine-binding positions include 384 to 387 (LGMQ), Glu-407, and Arg-473. Residues His-520 and Glu-522 contribute to the active site.

This sequence belongs to the CTP synthase family. As to quaternary structure, homotetramer.

The enzyme catalyses UTP + L-glutamine + ATP + H2O = CTP + L-glutamate + ADP + phosphate + 2 H(+). The catalysed reaction is L-glutamine + H2O = L-glutamate + NH4(+). It catalyses the reaction UTP + NH4(+) + ATP = CTP + ADP + phosphate + 2 H(+). The protein operates within pyrimidine metabolism; CTP biosynthesis via de novo pathway; CTP from UDP: step 2/2. Allosterically activated by GTP, when glutamine is the substrate; GTP has no effect on the reaction when ammonia is the substrate. The allosteric effector GTP functions by stabilizing the protein conformation that binds the tetrahedral intermediate(s) formed during glutamine hydrolysis. Inhibited by the product CTP, via allosteric rather than competitive inhibition. Functionally, catalyzes the ATP-dependent amination of UTP to CTP with either L-glutamine or ammonia as the source of nitrogen. Regulates intracellular CTP levels through interactions with the four ribonucleotide triphosphates. The protein is CTP synthase of Ralstonia nicotianae (strain ATCC BAA-1114 / GMI1000) (Ralstonia solanacearum).